A 197-amino-acid polypeptide reads, in one-letter code: MYEYIKGKYIDMYKDYIVIENNNIGYKIYTSGSTMAKLPSIGENIMLYTEQIVREDFIGIYGFLTKDELSMFKLLLTINGVGAKAALSLLSISNVSTLKYAIKVGDEKTITRAPGIGKKTAQRIILELKDKIEIDISEEDDEQIINKVTDDKKVLEAVAALVTLGYSEKEASKVINLCDKNNSLEQIIKEALKHLMK.

Residues 1–64 (MYEYIKGKYI…EDFIGIYGFL (64 aa)) form a domain I region. The interval 65–143 (TKDELSMFKL…IDISEEDDEQ (79 aa)) is domain II. Positions 144 to 148 (IINKV) are flexible linker. The tract at residues 149–197 (TDDKKVLEAVAALVTLGYSEKEASKVINLCDKNNSLEQIIKEALKHLMK) is domain III.

This sequence belongs to the RuvA family. As to quaternary structure, homotetramer. Forms an RuvA(8)-RuvB(12)-Holliday junction (HJ) complex. HJ DNA is sandwiched between 2 RuvA tetramers; dsDNA enters through RuvA and exits via RuvB. An RuvB hexamer assembles on each DNA strand where it exits the tetramer. Each RuvB hexamer is contacted by two RuvA subunits (via domain III) on 2 adjacent RuvB subunits; this complex drives branch migration. In the full resolvosome a probable DNA-RuvA(4)-RuvB(12)-RuvC(2) complex forms which resolves the HJ.

The protein resides in the cytoplasm. The RuvA-RuvB-RuvC complex processes Holliday junction (HJ) DNA during genetic recombination and DNA repair, while the RuvA-RuvB complex plays an important role in the rescue of blocked DNA replication forks via replication fork reversal (RFR). RuvA specifically binds to HJ cruciform DNA, conferring on it an open structure. The RuvB hexamer acts as an ATP-dependent pump, pulling dsDNA into and through the RuvAB complex. HJ branch migration allows RuvC to scan DNA until it finds its consensus sequence, where it cleaves and resolves the cruciform DNA. The sequence is that of Holliday junction branch migration complex subunit RuvA from Clostridium botulinum (strain Loch Maree / Type A3).